The following is a 432-amino-acid chain: Luc7-like protein 3 (432 aa).

M1 is modified (N-acetylmethionine). S3, S110, and S115 each carry phosphoserine. Positions 124 to 181 (KNEEKIQVLTDKIDVLLQQIEELGSEGKVEEAQGMMKLVEQLKEERELLRSTTSTIES) form a coiled coil. Residue K231 is modified to N6-acetyllysine. Residues 234–287 (LRKRTEEPDRDERLKKEKQEREEREKEREREREERERKRRREEEEREKERARDR) are compositionally biased toward basic and acidic residues. The tract at residues 234–432 (LRKRTEEPDR…IKSEGDTQSN (199 aa)) is disordered. Basic residues predominate over residues 288 to 301 (ERRKRSRSRSRHSS). The segment covering 302–311 (RTSDRRCSRS) has biased composition (basic and acidic residues). Positions 312–367 (RDHKRSRSRERRRSRSRDRRRSRSHDRSERKHRSRSRDRRRSKSRDRKSYKHRSKS) are enriched in basic residues. Residues 368-414 (RDREQDRKSKEKEKRGSDDKKSSVKSGSREKQSEDTNTESKESDTKN) show a composition bias toward basic and acidic residues. A Phosphoserine modification is found at S420. Basic and acidic residues predominate over residues 421 to 432 (EDIKSEGDTQSN). Residue K424 forms a Glycyl lysine isopeptide (Lys-Gly) (interchain with G-Cter in SUMO1); alternate linkage. K424 participates in a covalent cross-link: Glycyl lysine isopeptide (Lys-Gly) (interchain with G-Cter in SUMO2); alternate. Phosphoserine is present on residues S425 and S431.

The protein belongs to the Luc7 family. As to quaternary structure, may interact with SFRS1 and form homodimers. Interacts with JMJD6. Interacts with RBM25. Interacts with RSRC1 (via Arg/Ser-rich domain). Interacts with RRP1B. In terms of processing, phosphorylated in vitro by SRPK1, SRPK2 and CLK1. As to expression, widely expressed. Highest levels in heart, brain, pancreas, thymus, ovary, small intestine and peripheral blood leukocytes, as well as cerebellum, putamen and pituitary gland. Lowest levels in lung, liver and kidney. Also expressed in fetal tissues, including brain, heart, kidney, thymus and lung.

It localises to the nucleus speckle. Functionally, binds cAMP regulatory element DNA sequence. May play a role in RNA splicing. This Homo sapiens (Human) protein is Luc7-like protein 3 (LUC7L3).